We begin with the raw amino-acid sequence, 158 residues long: Low molecular weight phosphotyrosine protein phosphatase (158 aa).

An N-acetylalanine modification is found at Ala-2. Cys-13 acts as the Nucleophile in catalysis. Arg-19 is an active-site residue. The Proton donor role is filled by Asp-130. Tyr-132 and Tyr-133 each carry phosphotyrosine.

The protein belongs to the low molecular weight phosphotyrosine protein phosphatase family. As to quaternary structure, interacts with EPHA2; dephosphorylates EPHA2. Interacts with EPHB1. Interacts with the SH3 domain of SPTAN1. In terms of processing, phosphorylated by LCK. Phosphorylation at Tyr-132 increases its phosphatase activity.

Its subcellular location is the cytoplasm. It carries out the reaction O-phospho-L-tyrosyl-[protein] + H2O = L-tyrosyl-[protein] + phosphate. The enzyme catalyses a phosphate monoester + H2O = an alcohol + phosphate. Its activity is regulated as follows. Inhibited by sulfhydryl reagents. Its function is as follows. Acts on tyrosine phosphorylated proteins, low-MW aryl phosphates and natural and synthetic acyl phosphates with differences in substrate specificity between isoform 1 and isoform 2. The protein is Low molecular weight phosphotyrosine protein phosphatase (ACP1) of Pongo abelii (Sumatran orangutan).